We begin with the raw amino-acid sequence, 76 residues long: Large ribosomal subunit protein uL29 (76 aa).

It belongs to the universal ribosomal protein uL29 family.

The polypeptide is Large ribosomal subunit protein uL29 (Corynebacterium diphtheriae (strain ATCC 700971 / NCTC 13129 / Biotype gravis)).